Reading from the N-terminus, the 110-residue chain is UPF0122 protein lin1916 (110 aa).

This sequence belongs to the UPF0122 family.

Functionally, might take part in the signal recognition particle (SRP) pathway. This is inferred from the conservation of its genetic proximity to ftsY/ffh. May be a regulatory protein. The sequence is that of UPF0122 protein lin1916 from Listeria innocua serovar 6a (strain ATCC BAA-680 / CLIP 11262).